A 153-amino-acid chain; its full sequence is Probable inactive ribonuclease-like protein 13 (153 aa).

The N-terminal stretch at 1-22 is a signal peptide; it reads MASDAASLLVLQLVLQPTLVTG.

It belongs to the pancreatic ribonuclease family.

The protein resides in the secreted. In terms of biological role, does not exhibit any ribonuclease activity. This chain is Probable inactive ribonuclease-like protein 13 (Rnase13), found in Rattus norvegicus (Rat).